The following is a 175-amino-acid chain: Transcription factor E (175 aa).

Residues 3–88 (ENPLIQQVLF…TWKPSLEKVP (86 aa)) form the HTH TFE/IIEalpha-type domain.

This sequence belongs to the TFE family. As to quaternary structure, monomer. Interaction with RNA polymerase subunits RpoF and RpoE is necessary for Tfe stimulatory transcription activity. Able to interact with Tbp and RNA polymerase in the absence of DNA promoter. Interacts both with the preinitiation and elongation complexes.

Functionally, transcription factor that plays a role in the activation of archaeal genes transcribed by RNA polymerase. Facilitates transcription initiation by enhancing TATA-box recognition by TATA-box-binding protein (Tbp), and transcription factor B (Tfb) and RNA polymerase recruitment. Not absolutely required for transcription in vitro, but particularly important in cases where Tbp or Tfb function is not optimal. It dynamically alters the nucleic acid-binding properties of RNA polymerases by stabilizing the initiation complex and destabilizing elongation complexes. Seems to translocate with the RNA polymerase following initiation and acts by binding to the non template strand of the transcription bubble in elongation complexes. This chain is Transcription factor E, found in Methanococcus maripaludis (strain C7 / ATCC BAA-1331).